Reading from the N-terminus, the 147-residue chain is Large ribosomal subunit protein bL9 (147 aa).

Belongs to the bacterial ribosomal protein bL9 family.

In terms of biological role, binds to the 23S rRNA. The chain is Large ribosomal subunit protein bL9 from Myxococcus xanthus (strain DK1622).